The sequence spans 152 residues: MVVQKSVVRSRVFGELEVSEENIIFFEEGIPAFENLKKFVIVKEDQSPFYWLQSVEDKDIAFVIINPFEIKPDYEFDLPDEIVNKLEITSAEDVAVFCIVVIPEDVKQTRVNLKAPVIINVNKRKGMQYLLDDERYPLRYYLFENLNSNVQK.

Belongs to the FliW family. In terms of assembly, interacts with translational regulator CsrA and flagellin(s).

The protein localises to the cytoplasm. Functionally, acts as an anti-CsrA protein, binds CsrA and prevents it from repressing translation of its target genes, one of which is flagellin. Binds to flagellin and participates in the assembly of the flagellum. This is Flagellar assembly factor FliW from Caldicellulosiruptor saccharolyticus (strain ATCC 43494 / DSM 8903 / Tp8T 6331).